Consider the following 571-residue polypeptide: Proline--tRNA ligase (571 aa).

Belongs to the class-II aminoacyl-tRNA synthetase family. ProS type 1 subfamily. In terms of assembly, homodimer.

It is found in the cytoplasm. It carries out the reaction tRNA(Pro) + L-proline + ATP = L-prolyl-tRNA(Pro) + AMP + diphosphate. In terms of biological role, catalyzes the attachment of proline to tRNA(Pro) in a two-step reaction: proline is first activated by ATP to form Pro-AMP and then transferred to the acceptor end of tRNA(Pro). As ProRS can inadvertently accommodate and process non-cognate amino acids such as alanine and cysteine, to avoid such errors it has two additional distinct editing activities against alanine. One activity is designated as 'pretransfer' editing and involves the tRNA(Pro)-independent hydrolysis of activated Ala-AMP. The other activity is designated 'posttransfer' editing and involves deacylation of mischarged Ala-tRNA(Pro). The misacylated Cys-tRNA(Pro) is not edited by ProRS. This chain is Proline--tRNA ligase, found in Vibrio vulnificus (strain CMCP6).